Here is a 120-residue protein sequence, read N- to C-terminus: MKVFIILGALNAMMAVGTGAFGAHGLENKLSAKYLSVWEKATTYQMYHGLGLLAIGIISGTTSINVNWVGWLLFFGIVFFSGSLYILALTQIRIIGAITPIGGVLFIVGWLMLVIGTFKI.

4 consecutive transmembrane segments (helical) span residues 3-23 (VFIILGALNAMMAVGTGAFGA), 46-66 (MYHGLGLLAIGIISGTTSINV), 69-89 (VGWLLFFGIVFFSGSLYILAL), and 94-114 (IIGAITPIGGVLFIVGWLMLV).

This sequence belongs to the UPF0382 family.

The protein resides in the cell membrane. The polypeptide is UPF0382 membrane protein SSP2132 (Staphylococcus saprophyticus subsp. saprophyticus (strain ATCC 15305 / DSM 20229 / NCIMB 8711 / NCTC 7292 / S-41)).